The chain runs to 382 residues: D-galactonate dehydratase (382 aa).

Mg(2+) is bound at residue aspartate 183. Histidine 185 acts as the Proton donor in catalysis. Mg(2+) is bound by residues glutamate 209 and glutamate 235. Residue histidine 285 is the Proton acceptor of the active site.

This sequence belongs to the mandelate racemase/muconate lactonizing enzyme family. GalD subfamily. Mg(2+) serves as cofactor.

The catalysed reaction is D-galactonate = 2-dehydro-3-deoxy-D-galactonate + H2O. It functions in the pathway carbohydrate acid metabolism; D-galactonate degradation; D-glyceraldehyde 3-phosphate and pyruvate from D-galactonate: step 1/3. In terms of biological role, catalyzes the dehydration of D-galactonate to 2-keto-3-deoxy-D-galactonate. The sequence is that of D-galactonate dehydratase from Ralstonia nicotianae (strain ATCC BAA-1114 / GMI1000) (Ralstonia solanacearum).